Consider the following 311-residue polypeptide: Porphobilinogen deaminase (311 aa).

Position 243 is an S-(dipyrrolylmethanemethyl)cysteine (cysteine 243).

This sequence belongs to the HMBS family. In terms of assembly, monomer. The cofactor is dipyrromethane.

The catalysed reaction is 4 porphobilinogen + H2O = hydroxymethylbilane + 4 NH4(+). The protein operates within porphyrin-containing compound metabolism; protoporphyrin-IX biosynthesis; coproporphyrinogen-III from 5-aminolevulinate: step 2/4. In terms of biological role, tetrapolymerization of the monopyrrole PBG into the hydroxymethylbilane pre-uroporphyrinogen in several discrete steps. The sequence is that of Porphobilinogen deaminase from Aliivibrio fischeri (strain ATCC 700601 / ES114) (Vibrio fischeri).